The primary structure comprises 169 residues: Aspartic protease inhibitor 3 (169 aa).

An N-linked (GlcNAc...) asparagine glycan is attached at asparagine 1. 2 disulfides stabilise this stretch: cysteine 30–cysteine 75 and cysteine 124–cysteine 134.

This sequence belongs to the protease inhibitor I3 (leguminous Kunitz-type inhibitor) family.

It is found in the vacuole. Functionally, inhibitor of cathepsin D (aspartic protease). May also inhibit trypsin and chymotrypsin (serine proteases). Protects the plant by inhibiting proteases of invading organisms. The chain is Aspartic protease inhibitor 3 from Solanum tuberosum (Potato).